The following is a 107-amino-acid chain: MKMPEKHDLLAAILAAKEQGIGAILAFAMAYLRGRYNGGAFTKTVIDATMCAIIAWFIRDLLDFAGLSSNLAYITSVFIGYIGTDSIGSLIKRFAAKKAGVEDGRNQ.

An N-formylmethionine modification is found at Met-1. Residues Met-1 to Lys-6 are Periplasmic-facing. 2 consecutive stretches face the cytoplasmic side: residues Met-1–Asn-37 and Phe-27–Arg-35. Residues His-7–Ala-26 form a helical membrane-spanning segment. A helical membrane pass occupies residues Gly-38–Ile-58. Topologically, residues Arg-59 to Asn-70 are periplasmic. Residues Leu-71–Ile-91 form a helical membrane-spanning segment. The Cytoplasmic segment spans residues Lys-92–Gln-107.

The protein belongs to the lambdavirus holin family. Homomultimer. Interacts with isoform Antiholin; this interaction blocks the holin homomultimerization and delays host cell lysis.

It localises to the host cell inner membrane. In terms of biological role, accumulates harmlessly in the cytoplasmic membrane until it reaches a critical concentration that triggers the formation of micron-scale pores (holes) causing host cell membrane disruption and endolysin escape into the periplasmic space. Determines the precise timing of host cell lysis. Participates with the endolysin and spanin proteins in the sequential events which lead to the programmed host cell lysis releasing the mature viral particles from the host cell. Counteracts the aggregation of the holin molecules and thus of pore formation. This Escherichia phage lambda (Bacteriophage lambda) protein is Antiholin (S).